Here is a 90-residue protein sequence, read N- to C-terminus: UPF0298 protein YlbG (90 aa).

It belongs to the UPF0298 family.

It localises to the cytoplasm. This Bacillus subtilis (strain 168) protein is UPF0298 protein YlbG (ylbG).